Here is a 151-residue protein sequence, read N- to C-terminus: MSESILEEAQRLIHGERNKNYGHPRENFKDIALLFSGYLEKEISDIDVANLMILMKIARVKGTGYHRDSFTDMAGYAGCVERIYEEPVEGEPRQWDTLADVPKDVKTVRSAGNAFWSRYPDYNERLWGHRDGFKLDHAKISEGPFVEVLGE.

This Mycobacterium phage D29 (Mycobacteriophage D29) protein is Gene 55 protein (55).